Here is a 150-residue protein sequence, read N- to C-terminus: CCAAT/enhancer-binding protein gamma (150 aa).

Lys-3 is covalently cross-linked (Glycyl lysine isopeptide (Lys-Gly) (interchain with G-Cter in SUMO2)). The disordered stretch occupies residues 27–94 (GLQQVPQLVP…QKAQDTLQRV (68 aa)). Low complexity predominate over residues 28 to 37 (LQQVPQLVPA). A compositionally biased stretch (basic and acidic residues) spans 56-72 (SPMDRNSDEYRQRRERN). The 64-residue stretch at 62 to 125 (SDEYRQRRER…SVLKDLFLEH (64 aa)) folds into the bZIP domain. Positions 66–93 (RQRRERNNMAVKKSRLKSKQKAQDTLQR) are basic motif. Positions 97–118 (LKEENERLEAKIKLLTKELSVL) are leucine-zipper.

The protein belongs to the bZIP family. C/EBP subfamily. In terms of assembly, binds DNA as a dimer and can form stable heterodimers with CEBPA and CEBPB. Interacts with ZNF638; this interaction increases transcriptional activation.

The protein localises to the nucleus. In terms of biological role, transcription factor that binds to the promoter and the enhancer regions of target genes. Binds to the enhancer element PRE-I (positive regulatory element-I) of the IL-4 gene. Binds to the promoter and the enhancer of the immunoglobulin heavy chain. Binds to GPE1, a cis-acting element in the G-CSF gene promoter. The polypeptide is CCAAT/enhancer-binding protein gamma (CEBPG) (Homo sapiens (Human)).